A 330-amino-acid chain; its full sequence is Anthranilate phosphoribosyltransferase (330 aa).

5-phospho-alpha-D-ribose 1-diphosphate contacts are provided by residues Gly77, 80-81, Thr85, 87-90, 105-113, and Ser117; these read GD, NIST, and KHGNKAVSS. Gly77 contributes to the anthranilate binding site. Mg(2+) is bound at residue Ser89. Asn108 lines the anthranilate pocket. Residue Arg163 coordinates anthranilate. 2 residues coordinate Mg(2+): Asp222 and Glu223.

Belongs to the anthranilate phosphoribosyltransferase family. As to quaternary structure, homodimer. The cofactor is Mg(2+).

The enzyme catalyses N-(5-phospho-beta-D-ribosyl)anthranilate + diphosphate = 5-phospho-alpha-D-ribose 1-diphosphate + anthranilate. It participates in amino-acid biosynthesis; L-tryptophan biosynthesis; L-tryptophan from chorismate: step 2/5. In terms of biological role, catalyzes the transfer of the phosphoribosyl group of 5-phosphorylribose-1-pyrophosphate (PRPP) to anthranilate to yield N-(5'-phosphoribosyl)-anthranilate (PRA). This chain is Anthranilate phosphoribosyltransferase, found in Pelagibacter ubique (strain HTCC1062).